We begin with the raw amino-acid sequence, 184 residues long: Probable N-acetyltransferase san (184 aa).

The N-acetyltransferase domain maps to 6–155; that stretch reads IELGDVTPHN…DAHVLQKTLR (150 aa). Tyr-31 provides a ligand contact to substrate. Lys-47 bears the N6-acetyllysine; by autocatalysis mark. Residue Tyr-73 is part of the active site. Residue Met-75 participates in substrate binding. 77 to 90 is a binding site for acetyl-CoA; the sequence is LGCLSPYRRLGIGT. Residue His-112 is part of the active site. 117–126 contributes to the CoA binding site; that stretch reads NNGAIEFYKK. The tract at residues 138-141 is substrate; the sequence is YYKR. Positions 157–174 are enriched in low complexity; the sequence is TAPNSNSTATSTTANSNS. The disordered stretch occupies residues 157 to 176; the sequence is TAPNSNSTATSTTANSNSRS.

This sequence belongs to the acetyltransferase family. In terms of assembly, component of an acetyltransferase complex, at least composed of san, Ard1 and Nat1. In terms of processing, autoacetylated.

The protein localises to the cytoplasm. The catalysed reaction is N-terminal L-methionyl-L-alanyl-[protein] + acetyl-CoA = N-terminal N(alpha)-acetyl-L-methionyl-L-alanyl-[protein] + CoA + H(+). The enzyme catalyses N-terminal L-methionyl-L-seryl-[protein] + acetyl-CoA = N-terminal N(alpha)-acetyl-L-methionyl-L-seryl-[protein] + CoA + H(+). It catalyses the reaction N-terminal L-methionyl-L-valyl-[protein] + acetyl-CoA = N-terminal N(alpha)-acetyl-L-methionyl-L-valyl-[protein] + CoA + H(+). It carries out the reaction N-terminal L-methionyl-L-threonyl-[protein] + acetyl-CoA = N-terminal N(alpha)-acetyl-L-methionyl-L-threonyl-[protein] + CoA + H(+). The catalysed reaction is N-terminal L-methionyl-L-lysyl-[protein] + acetyl-CoA = N-terminal N(alpha)-acetyl-L-methionyl-L-lysyl-[protein] + CoA + H(+). The enzyme catalyses N-terminal L-methionyl-L-leucyl-[protein] + acetyl-CoA = N-terminal N(alpha)-acetyl-L-methionyl-L-leucyl-[protein] + CoA + H(+). It catalyses the reaction N-terminal L-methionyl-L-phenylalanyl-[protein] + acetyl-CoA = N-terminal N(alpha)-acetyl-L-methionyl-L-phenylalanyl-[protein] + CoA + H(+). It carries out the reaction N-terminal L-methionyl-L-tyrosyl-[protein] + acetyl-CoA = N-terminal N(alpha)-acetyl-L-methionyl-L-tyrosyl-[protein] + CoA + H(+). In terms of biological role, N-alpha-acetyltransferase that acetylates the N-terminus of proteins that retain their initiating methionine. Has a broad substrate specificity: able to acetylate the initiator methionine of most peptides. Also displays N-epsilon-acetyltransferase activity by mediating acetylation of the side chain of specific lysines on proteins. Autoacetylates. Required for the establishment of sister chromatid cohesion and couple the processes of cohesion and DNA replication to ensure that only sister chromatids become paired together. Required for the interaction between Scc1/vtd and SMC3, possibly by mediating N-terminal acetylation of Scc1/vtd. (Microbial infection) Required for optimal replication of E.chaffeensis in the immune tissues, hemocytes, and fat body. In Drosophila melanogaster (Fruit fly), this protein is Probable N-acetyltransferase san (san).